A 170-amino-acid polypeptide reads, in one-letter code: UPF0260 protein RPB_3505 (170 aa).

The protein belongs to the UPF0260 family.

In Rhodopseudomonas palustris (strain HaA2), this protein is UPF0260 protein RPB_3505.